The primary structure comprises 190 residues: Lipid A acyltransferase PagP (190 aa).

Residues Met-1–Ala-18 form the signal peptide. Residues His-60, Asp-103, and Ser-104 contribute to the active site.

Belongs to the lipid A palmitoyltransferase family. Homodimer.

The protein resides in the cell outer membrane. It carries out the reaction a lipid A + a 1,2-diacyl-sn-glycero-3-phosphocholine = a hepta-acyl lipid A + a 2-acyl-sn-glycero-3-phosphocholine. The catalysed reaction is a lipid IVA + a 1,2-diacyl-sn-glycero-3-phosphocholine = a lipid IVB + a 2-acyl-sn-glycero-3-phosphocholine. It catalyses the reaction a lipid IIA + a 1,2-diacyl-sn-glycero-3-phosphocholine = a lipid IIB + a 2-acyl-sn-glycero-3-phosphocholine. Functionally, transfers a fatty acid residue from the sn-1 position of a phospholipid to the N-linked hydroxyfatty acid chain on the proximal unit of lipid A or its precursors. This chain is Lipid A acyltransferase PagP, found in Legionella pneumophila (strain Paris).